A 254-amino-acid chain; its full sequence is Arginine/ornithine transport ATP-binding protein AotP (254 aa).

One can recognise an ABC transporter domain in the interval 4–249 (LEVQDLHKRY…PQSDRLKQFL (246 aa)). Residue 36 to 43 (GSSGSGKS) participates in ATP binding.

This sequence belongs to the ABC transporter superfamily.

The protein localises to the cell inner membrane. Part of the arginine-inducible binding-protein-dependent transport system for arginine and ornithine. Probably responsible for energy coupling to the transport system. This is Arginine/ornithine transport ATP-binding protein AotP (aotP) from Pseudomonas aeruginosa (strain ATCC 15692 / DSM 22644 / CIP 104116 / JCM 14847 / LMG 12228 / 1C / PRS 101 / PAO1).